Reading from the N-terminus, the 502-residue chain is Capsid protein (502 aa).

Disordered stretches follow at residues 369–392 (ISELPIASPPQNPHKYTVRPSDYD) and 405–487 (LTDS…TRKQ). Residues 447-456 (SRRRKRRRRS) are compositionally biased toward basic residues.

It belongs to the anelloviridae capsid protein family.

Its subcellular location is the virion. Self-assembles to form an icosahedral capsid with a T=1 symmetry, about 30 nm in diameter, and consisting of 60 capsid proteins. The capsid encapsulates the genomic DNA. Capsid protein is involved in attachment and entry into the host cell. The polypeptide is Capsid protein (Tupaia).